The following is a 311-amino-acid chain: Probable manganese-dependent inorganic pyrophosphatase (311 aa).

Residues histidine 9, aspartate 13, aspartate 15, aspartate 77, histidine 99, and aspartate 151 each contribute to the Mn(2+) site.

The protein belongs to the PPase class C family. It depends on Mn(2+) as a cofactor.

It localises to the cytoplasm. The enzyme catalyses diphosphate + H2O = 2 phosphate + H(+). This Streptococcus suis (strain 98HAH33) protein is Probable manganese-dependent inorganic pyrophosphatase.